Consider the following 185-residue polypeptide: NADH-quinone oxidoreductase subunit B (185 aa).

4 residues coordinate [4Fe-4S] cluster: Cys38, Cys39, Cys104, and Cys133.

Belongs to the complex I 20 kDa subunit family. In terms of assembly, NDH-1 is composed of 14 different subunits. Subunits NuoB, C, D, E, F, and G constitute the peripheral sector of the complex. The cofactor is [4Fe-4S] cluster.

It is found in the cell membrane. It carries out the reaction a quinone + NADH + 5 H(+)(in) = a quinol + NAD(+) + 4 H(+)(out). Functionally, NDH-1 shuttles electrons from NADH, via FMN and iron-sulfur (Fe-S) centers, to quinones in the respiratory chain. The immediate electron acceptor for the enzyme in this species is believed to be a menaquinone. Couples the redox reaction to proton translocation (for every two electrons transferred, four hydrogen ions are translocated across the cytoplasmic membrane), and thus conserves the redox energy in a proton gradient. The protein is NADH-quinone oxidoreductase subunit B of Cutibacterium acnes (strain DSM 16379 / KPA171202) (Propionibacterium acnes).